The following is a 264-amino-acid chain: 3-methyl-2-oxobutanoate hydroxymethyltransferase (264 aa).

Residues aspartate 45 and aspartate 84 each coordinate Mg(2+). Residues 45–46 (DS), aspartate 84, and lysine 113 each bind 3-methyl-2-oxobutanoate. Residue glutamate 115 participates in Mg(2+) binding. The Proton acceptor role is filled by glutamate 182.

This sequence belongs to the PanB family. Homodecamer; pentamer of dimers. It depends on Mg(2+) as a cofactor.

Its subcellular location is the cytoplasm. It catalyses the reaction 3-methyl-2-oxobutanoate + (6R)-5,10-methylene-5,6,7,8-tetrahydrofolate + H2O = 2-dehydropantoate + (6S)-5,6,7,8-tetrahydrofolate. The protein operates within cofactor biosynthesis; (R)-pantothenate biosynthesis; (R)-pantoate from 3-methyl-2-oxobutanoate: step 1/2. Its function is as follows. Catalyzes the reversible reaction in which hydroxymethyl group from 5,10-methylenetetrahydrofolate is transferred onto alpha-ketoisovalerate to form ketopantoate. In Caldicellulosiruptor saccharolyticus (strain ATCC 43494 / DSM 8903 / Tp8T 6331), this protein is 3-methyl-2-oxobutanoate hydroxymethyltransferase.